We begin with the raw amino-acid sequence, 229 residues long: Glutamine amidotransferase-like class 1 domain-containing protein 1 (229 aa).

Positions Met-1–Ala-34 are cleaved as a signal peptide. 2 N-linked (GlcNAc...) asparagine glycosylation sites follow: Asn-154 and Asn-212.

Belongs to the peptidase C56 family. As to quaternary structure, homotetramer. Component of the FERRY complex.

Its subcellular location is the secreted. The protein localises to the early endosome. Component of the FERRY complex (Five-subunit Endosomal Rab5 and RNA/ribosome intermediary). The FERRY complex directly interacts with mRNAs and RAB5A, and functions as a RAB5A effector involved in the localization and the distribution of specific mRNAs most likely by mediating their endosomal transport. The complex recruits mRNAs and ribosomes to early endosomes through direct mRNA-interaction. The protein is Glutamine amidotransferase-like class 1 domain-containing protein 1 of Xenopus laevis (African clawed frog).